Here is a 370-residue protein sequence, read N- to C-terminus: Flagellar P-ring protein (370 aa).

Residues 1–21 (MKLLLFILMISSIIIVPVGQA) form the signal peptide.

The protein belongs to the FlgI family. In terms of assembly, the basal body constitutes a major portion of the flagellar organelle and consists of four rings (L,P,S, and M) mounted on a central rod.

It is found in the periplasm. The protein resides in the bacterial flagellum basal body. In terms of biological role, assembles around the rod to form the L-ring and probably protects the motor/basal body from shearing forces during rotation. This is Flagellar P-ring protein from Pseudoalteromonas atlantica (strain T6c / ATCC BAA-1087).